The sequence spans 154 residues: Ribosomal RNA large subunit methyltransferase H (154 aa).

S-adenosyl-L-methionine is bound by residues Gly-103 and 122 to 127 (FSKLTF).

Belongs to the RNA methyltransferase RlmH family. In terms of assembly, homodimer.

Its subcellular location is the cytoplasm. The enzyme catalyses pseudouridine(1915) in 23S rRNA + S-adenosyl-L-methionine = N(3)-methylpseudouridine(1915) in 23S rRNA + S-adenosyl-L-homocysteine + H(+). In terms of biological role, specifically methylates the pseudouridine at position 1915 (m3Psi1915) in 23S rRNA. The polypeptide is Ribosomal RNA large subunit methyltransferase H (Caldicellulosiruptor bescii (strain ATCC BAA-1888 / DSM 6725 / KCTC 15123 / Z-1320) (Anaerocellum thermophilum)).